Consider the following 461-residue polypeptide: Cysteine--tRNA ligase (461 aa).

Zn(2+) is bound at residue C30. The short motif at 32-42 (VTVYDLCHIGH) is the 'HIGH' region element. 3 residues coordinate Zn(2+): C211, H236, and E240. The 'KMSKS' region signature appears at 268–272 (KMSKS). K271 contributes to the ATP binding site.

This sequence belongs to the class-I aminoacyl-tRNA synthetase family. In terms of assembly, monomer. The cofactor is Zn(2+).

It is found in the cytoplasm. It carries out the reaction tRNA(Cys) + L-cysteine + ATP = L-cysteinyl-tRNA(Cys) + AMP + diphosphate. This is Cysteine--tRNA ligase from Shewanella sp. (strain MR-4).